We begin with the raw amino-acid sequence, 282 residues long: Probable endonuclease 4 (282 aa).

His-66, His-106, Glu-143, Asp-176, His-179, His-213, Asp-226, His-228, and Glu-258 together coordinate Zn(2+).

This sequence belongs to the AP endonuclease 2 family. Zn(2+) serves as cofactor.

The enzyme catalyses Endonucleolytic cleavage to 5'-phosphooligonucleotide end-products.. In terms of biological role, endonuclease IV plays a role in DNA repair. It cleaves phosphodiester bonds at apurinic or apyrimidinic (AP) sites, generating a 3'-hydroxyl group and a 5'-terminal sugar phosphate. In Aquifex aeolicus (strain VF5), this protein is Probable endonuclease 4.